A 294-amino-acid chain; its full sequence is Phenylalanine-4-hydroxylase (294 aa).

The disordered stretch occupies residues 1–20; the sequence is MSGDGLSNGPPPGARPDWTI. Fe cation-binding residues include histidine 129, histidine 134, and glutamate 175.

The protein belongs to the biopterin-dependent aromatic amino acid hydroxylase family. The cofactor is Fe(2+).

It carries out the reaction (6R)-L-erythro-5,6,7,8-tetrahydrobiopterin + L-phenylalanine + O2 = (4aS,6R)-4a-hydroxy-L-erythro-5,6,7,8-tetrahydrobiopterin + L-tyrosine. The protein operates within amino-acid degradation; L-phenylalanine degradation; acetoacetate and fumarate from L-phenylalanine: step 1/6. The sequence is that of Phenylalanine-4-hydroxylase (phhA) from Caulobacter vibrioides (strain ATCC 19089 / CIP 103742 / CB 15) (Caulobacter crescentus).